The primary structure comprises 1023 residues: 2-oxoglutarate dehydrogenase complex component E1 (1023 aa).

The N-terminal 40 residues, 1 to 40, are a transit peptide targeting the mitochondrion; that stretch reads MFHLRTCAAKLRPLTASQTVKTFSQNRPAAARTFQQIRCY. N6-succinyllysine is present on lysine 74. Serine 100 is subject to Phosphoserine. Residues histidine 143, aspartate 156, and aspartate 158 each contribute to the Ca(2+) site. Arginine 312 contributes to the thiamine diphosphate binding site. Lysine 401 carries the post-translational modification N6-acetyllysine. Thiamine diphosphate-binding residues include aspartate 411, asparagine 444, and isoleucine 446. The Mg(2+) site is built by aspartate 411, asparagine 444, and isoleucine 446. Lysine 534 participates in a covalent cross-link: Glycyl lysine isopeptide (Lys-Gly) (interchain with G-Cter in ubiquitin). Lysine 564 carries the post-translational modification N6-succinyllysine. A thiamine diphosphate-binding site is contributed by glutamine 676. N6-acetyllysine is present on lysine 970.

This sequence belongs to the alpha-ketoglutarate dehydrogenase family. In terms of assembly, homodimer. The 2-oxoglutarate dehydrogenase complex is composed of OGDH (2-oxoglutarate dehydrogenase; E1), DLST (dihydrolipoamide succinyltransferase; E2), DLD (dihydrolipoamide dehydrogenase; E3) and the assembly factor KGD4. It contains multiple copies of the three enzymatic components (E1, E2 and E3). In the nucleus, the 2-oxoglutarate dehydrogenase complex associates with KAT2A. Interacts with ABHD11; this interaction maintains the functional lipoylation of the 2-oxoglutarate dehydrogenase complex. Thiamine diphosphate is required as a cofactor. Requires Mg(2+) as cofactor.

The protein resides in the mitochondrion. It is found in the nucleus. It catalyses the reaction N(6)-[(R)-lipoyl]-L-lysyl-[protein] + 2-oxoglutarate + H(+) = N(6)-[(R)-S(8)-succinyldihydrolipoyl]-L-lysyl-[protein] + CO2. Calcium ions and ADP stimulate, whereas ATP and NADH reduce catalytic activity. Functionally, 2-oxoglutarate dehydrogenase (E1o) component of the 2-oxoglutarate dehydrogenase complex (OGDHC). Participates in the first step, rate limiting for the overall conversion of 2-oxoglutarate to succinyl-CoA and CO(2) catalyzed by the whole OGDHC. Catalyzes the irreversible decarboxylation of 2-oxoglutarate (alpha-ketoglutarate) via the thiamine diphosphate (ThDP) cofactor and subsequent transfer of the decarboxylated acyl intermediate on an oxidized dihydrolipoyl group that is covalently amidated to the E2 enzyme (dihydrolipoyllysine-residue succinyltransferase or DLST). Plays a key role in the Krebs (citric acid) cycle, which is a common pathway for oxidation of fuel molecules, including carbohydrates, fatty acids, and amino acids. Can catalyze the decarboxylation of 2-oxoadipate in vitro, but at a much lower rate than 2-oxoglutarate. Mainly active in the mitochondrion. A fraction of the 2-oxoglutarate dehydrogenase complex also localizes in the nucleus and is required for lysine succinylation of histones: associates with KAT2A on chromatin and provides succinyl-CoA to histone succinyltransferase KAT2A. The protein is 2-oxoglutarate dehydrogenase complex component E1 of Macaca fascicularis (Crab-eating macaque).